The following is a 278-amino-acid chain: Methyltransferase adrK (278 aa).

S-adenosyl-L-methionine contacts are provided by residues Asp-124–Leu-125, Asp-151–Val-152, and Val-152–Leu-153.

This sequence belongs to the class I-like SAM-binding methyltransferase superfamily. As to quaternary structure, homodimer.

Its pathway is secondary metabolite biosynthesis; terpenoid biosynthesis. In terms of biological role, methyltransferase; part of the gene cluster that mediates the biosynthesis of andrastins, meroterpenoid compounds that exhibit inhibitory activity against ras farnesyltransferase, suggesting that they could be promising leads for antitumor agents. The first step of the pathway is the synthesis of 3,5-dimethylorsellinic acid (DMOA) by the polyketide synthase adrD via condensation of one acetyl-CoA starter unit with 3 malonyl-CoA units and 2 methylations. DMAO is then converted to farnesyl-DMAO by the prenyltransferase adrG. The methyltransferase adrK catalyzes the methylation of the carboxyl group of farnesyl-DMAO to farnesyl-DMAO methyl ester which is further converted to epoxyfarnesyl-DMAO methyl ester by the FAD-dependent monooxygenase adrH. The terpene cyclase adrI then catalyzes the carbon skeletal rearrangement to generate the andrastin E, the first compound in the pathway having the andrastin scaffold, with the tetracyclic ring system. The post-cyclization tailoring enzymes adrF, adrE, adrJ, and adrA, are involved in the conversion of andrastin E into andrastin A. The short chain dehydrogenase adrF is responsible for the oxidation of the C-3 a hydroxyl group of andrastin E to yield the corresponding ketone, andrastin D. The ketoreductase adrE stereoselectively reduces the carbonyl moiety to reverse the stereochemistry of the C-3 position to yield andrastin F. The acetyltransferase adrJ is the acetyltransferase that attaches the acetyl group to the C-3 hydroxyl group of andrastin F to yield andrastin C. Finally, the cytochrome P450 monooxygenase adrA catalyzes two sequential oxidation reactions of the C-23 methyl group, to generate the corresponding alcohol andrastin B, and aldehyde andrastin A. The polypeptide is Methyltransferase adrK (Penicillium roqueforti).